Reading from the N-terminus, the 465-residue chain is Dihydrolipoyl dehydrogenase (465 aa).

Residues 34–42, lysine 51, and glycine 114 contribute to the FAD site; that span reads EEREAGGTC. A disulfide bridge links cysteine 42 with cysteine 47. NAD(+) contacts are provided by residues 180 to 184, glutamate 203, valine 237, and 264 to 267; these read GGGVI and SIGR. The FAD site is built by aspartate 307 and alanine 315. Histidine 439 acts as the Proton acceptor in catalysis.

This sequence belongs to the class-I pyridine nucleotide-disulfide oxidoreductase family. FAD serves as cofactor.

It localises to the cytoplasm. The enzyme catalyses N(6)-[(R)-dihydrolipoyl]-L-lysyl-[protein] + NAD(+) = N(6)-[(R)-lipoyl]-L-lysyl-[protein] + NADH + H(+). In terms of biological role, the branched-chain alpha-keto dehydrogenase complex catalyzes the overall conversion of alpha-keto acids to acyl-CoA and CO(2). It contains multiple copies of 3 enzymatic components: branched-chain alpha-keto acid decarboxylase (E1), lipoamide acyltransferase (E2) and lipoamide dehydrogenase (E3). The chain is Dihydrolipoyl dehydrogenase (lpdA) from Chlamydia muridarum (strain MoPn / Nigg).